Reading from the N-terminus, the 128-residue chain is UPF0102 protein BCG_2919c (128 aa).

Belongs to the UPF0102 family.

This chain is UPF0102 protein BCG_2919c, found in Mycobacterium bovis (strain BCG / Pasteur 1173P2).